A 332-amino-acid chain; its full sequence is Glyceraldehyde-3-phosphate dehydrogenase (332 aa).

Residues 10-11 (RI), aspartate 32, and methionine 77 each bind NAD(+). Residues 148-150 (SCT), threonine 179, 208-209 (TG), and arginine 231 contribute to the D-glyceraldehyde 3-phosphate site. Residue cysteine 149 is the Nucleophile of the active site. Residue asparagine 313 participates in NAD(+) binding.

It belongs to the glyceraldehyde-3-phosphate dehydrogenase family. Homotetramer.

It localises to the cytoplasm. The enzyme catalyses D-glyceraldehyde 3-phosphate + phosphate + NAD(+) = (2R)-3-phospho-glyceroyl phosphate + NADH + H(+). The protein operates within carbohydrate degradation; glycolysis; pyruvate from D-glyceraldehyde 3-phosphate: step 1/5. The polypeptide is Glyceraldehyde-3-phosphate dehydrogenase (GPDA) (Phytophthora infestans (Potato late blight agent)).